The following is a 318-amino-acid chain: Protein W (318 aa).

2 disordered regions span residues 1–23 (MDQD…GGRE) and 38–318 (SEPT…KKGA). Over residues 7-20 (ILKEDSEVEREAPG) the composition is skewed to basic and acidic residues. Positions 50–59 (LHNTINTPQG) are enriched in polar residues. Serine 68 carries the phosphoserine; by host modification. Basic and acidic residues predominate over residues 83–101 (RSGEESRVSGRTSKPEAEA). A Phosphoserine; by host modification is found at serine 125. The span at 150–168 (GIEDENREMAAHPDKRGED) shows a compositional bias: basic and acidic residues. Positions 191–206 (ASNNGRSMEPGSSHSA) are enriched in polar residues. 4 positions are modified to phosphoserine; by host: serine 192, serine 249, serine 257, and serine 260.

The protein is Protein W (P/V/C) of Sendai virus (strain Z) (SeV).